Consider the following 132-residue polypeptide: Small ribosomal subunit protein uS8 (132 aa).

This sequence belongs to the universal ribosomal protein uS8 family. Part of the 30S ribosomal subunit. Contacts proteins S5 and S12.

In terms of biological role, one of the primary rRNA binding proteins, it binds directly to 16S rRNA central domain where it helps coordinate assembly of the platform of the 30S subunit. The chain is Small ribosomal subunit protein uS8 from Clavibacter michiganensis subsp. michiganensis (strain NCPPB 382).